The following is a 381-amino-acid chain: Chorismate synthase (381 aa).

NADP(+) contacts are provided by R41 and R47. FMN contacts are provided by residues 127 to 129 (RAS), 247 to 248 (QA), G291, 306 to 310 (KPIPT), and R332.

Belongs to the chorismate synthase family. Homotetramer. Requires FMNH2 as cofactor.

It catalyses the reaction 5-O-(1-carboxyvinyl)-3-phosphoshikimate = chorismate + phosphate. The protein operates within metabolic intermediate biosynthesis; chorismate biosynthesis; chorismate from D-erythrose 4-phosphate and phosphoenolpyruvate: step 7/7. Its function is as follows. Catalyzes the anti-1,4-elimination of the C-3 phosphate and the C-6 proR hydrogen from 5-enolpyruvylshikimate-3-phosphate (EPSP) to yield chorismate, which is the branch point compound that serves as the starting substrate for the three terminal pathways of aromatic amino acid biosynthesis. This reaction introduces a second double bond into the aromatic ring system. This chain is Chorismate synthase, found in Anaeromyxobacter dehalogenans (strain 2CP-1 / ATCC BAA-258).